Reading from the N-terminus, the 809-residue chain is Probable disease resistance protein At5g66900 (809 aa).

The RPW8 domain occupies Met1 to Val150. Positions Pro50 to Phe86 form a coiled coil. NB-ARC domains lie at Pro153 to Trp280 and Ser339 to Val438. Ala194 to Thr201 lines the ATP pocket. Positions Gln494–Phe515 form a coiled coil. LRR repeat units lie at residues Lys650 to Ile672, Ser674 to Leu696, Arg698 to Leu720, and Asn722 to Leu744.

Belongs to the disease resistance NB-LRR family.

Probable disease resistance protein. This chain is Probable disease resistance protein At5g66900, found in Arabidopsis thaliana (Mouse-ear cress).